The primary structure comprises 120 residues: Xibalbin-1 (120 aa).

The signal sequence occupies residues 1–21; sequence MISKILIAACALLLISHLVLA. The propeptide occupies 22 to 63; the sequence is VPYLEDGLNSLHNRTGESDETRGYTIQLLKEMPEDDAVEDYS. Intrachain disulfides connect cysteine 79/cysteine 94, cysteine 86/cysteine 99, cysteine 93/cysteine 110, and cysteine 101/cysteine 108.

Belongs to the xibalbin-1 family. As to expression, expressed by the venom gland. Not found in the whole body.

Its subcellular location is the secreted. Functionally, probable neurotoxin. Strongly inhibits voltage-gated potassium channels (Kv1.1/KCNA1, Kv1.2/KCNA2, Kv1.3/KCNA3, and Kv1.6/KCNA6, with the highest toxicity against Kv1.6 (74% inhibition at 1 uM)) and mildly inhibits sodium channels (Nav1.2/SCN2A, Nav1.4/SCN4A, Nav1.5/SCN5A, Nav1.6/SCN8A, and BgNav). Induces activation of protein kinase A type II (PKA-II) and MAP kinase Erk1/2 in primary nociceptive and non-nociceptive sensory neurons. Does not show cytotoxic activity. Does not have an impact on Ca2+, cAMP, and NO signaling in the cell types analyzed. Does not interfere with the adhesion of leukocytes to endothelial cells. In Xibalbanus tulumensis (Blind cave remipede), this protein is Xibalbin-1.